The sequence spans 229 residues: Glutathione S-transferase 3 (229 aa).

A2 carries the post-translational modification Blocked amino end (Ala). In terms of domain architecture, GST N-terminal spans 3–83 (AKPVLYYFNG…YIAGKYNLYG (81 aa)). Glutathione contacts are provided by residues Y9, 54 to 55 (QV), and 67 to 68 (QT). The region spanning 85–207 (DLKERALIDM…LAPGSKRKPI (123 aa)) is the GST C-terminal domain.

Belongs to the GST superfamily. Alpha family. Homodimer or heterodimer (with a subunit from group CL-4).

The protein localises to the cytoplasm. It carries out the reaction RX + glutathione = an S-substituted glutathione + a halide anion + H(+). In terms of biological role, catalyzes the conjugation of GSH to a wide variety of electrophilic alkylating agents. Also involved in the metabolism of lipid hydroperoxides, prostaglandins and leukotriene A4 and in binding of non-substrate hydrophobic ligands such as bile acids, a number of drugs and thyroid hormones. This GST does not exhibit peroxidase activity. The sequence is that of Glutathione S-transferase 3 from Gallus gallus (Chicken).